A 286-amino-acid polypeptide reads, in one-letter code: NADPH-dependent 7-cyano-7-deazaguanine reductase (286 aa).

Residue 88 to 90 (VES) participates in substrate binding. 90–91 (SK) provides a ligand contact to NADPH. The active-site Thioimide intermediate is the Cys194. The active-site Proton donor is the Asp201. 233–234 (HE) lines the substrate pocket. 262-263 (RG) contacts NADPH.

Belongs to the GTP cyclohydrolase I family. QueF type 2 subfamily. As to quaternary structure, homodimer.

It is found in the cytoplasm. The catalysed reaction is 7-aminomethyl-7-carbaguanine + 2 NADP(+) = 7-cyano-7-deazaguanine + 2 NADPH + 3 H(+). Its pathway is tRNA modification; tRNA-queuosine biosynthesis. Catalyzes the NADPH-dependent reduction of 7-cyano-7-deazaguanine (preQ0) to 7-aminomethyl-7-deazaguanine (preQ1). This is NADPH-dependent 7-cyano-7-deazaguanine reductase from Colwellia psychrerythraea (strain 34H / ATCC BAA-681) (Vibrio psychroerythus).